The sequence spans 96 residues: Muconolactone Delta-isomerase (96 aa).

It belongs to the muconolactone Delta-isomerase family. Homodecamer.

It catalyses the reaction (S)-muconolactone = (4,5-dihydro-5-oxofuran-2-yl)-acetate. It participates in aromatic compound metabolism; beta-ketoadipate pathway; 5-oxo-4,5-dihydro-2-furylacetate from catechol: step 3/3. This is Muconolactone Delta-isomerase (catC) from Acinetobacter baylyi (strain ATCC 33305 / BD413 / ADP1).